The sequence spans 113 residues: Iron-sulfur cluster insertion protein ErpA (113 aa).

Residues Cys41, Cys105, and Cys107 each contribute to the iron-sulfur cluster site.

It belongs to the HesB/IscA family. In terms of assembly, homodimer. It depends on iron-sulfur cluster as a cofactor.

Its function is as follows. Required for insertion of 4Fe-4S clusters for at least IspG. This chain is Iron-sulfur cluster insertion protein ErpA, found in Histophilus somni (strain 129Pt) (Haemophilus somnus).